The sequence spans 565 residues: Deformed epidermal autoregulatory factor 1 homolog (565 aa).

Disordered stretches follow at residues 34–62 (GGEA…ETPR) and 162–190 (GLKG…KGGT). Residues 169–181 (PLTPGPQSPPTPL) are compositionally biased toward pro residues. Threonine 171 is subject to Phosphothreonine. Serine 176 bears the Phosphoserine mark. Threonine 179 bears the Phosphothreonine mark. The region spanning 193–273 (NWDPSVYDSE…QCLIQDGILN (81 aa)) is the SAND domain. The short motif at 301–316 (KRRKKENELPTTPVKK) is the Nuclear localization signal element. Residues 403–478 (IAPFPEAALP…QLKTLFEQAK (76 aa)) form an interaction with LMO4 region. Threonine 432 is modified (phosphothreonine). The residue at position 448 (serine 448) is a Phosphoserine. Zn(2+) contacts are provided by cysteine 504, cysteine 507, cysteine 515, cysteine 518, cysteine 524, cysteine 528, histidine 536, and cysteine 540. An MYND-type zinc finger spans residues 504–540 (CVNCGREAMSECTGCHKVNYCSTFCQRKDWKDHQHIC).

In terms of assembly, homodimer. Isoform 1 and isoform 4 may form a heterodimer. Interacts with LMO2 and CLIM2. Interacts with LMO4; LMO4 blocks export from nucleus. May interact with the corepressors NCOR1 and NCRO2. Identified in a complex with the XRCC5 and XRCC6 heterodimer. Interacts (via the SAND domain) with the DNA-PK complex subunit XRCC6; the interaction is direct and may be inhibited by DNA-binding. May be phosphorylated by DNA-PK complex in a DNA independent manner (in vitro). In terms of tissue distribution, expressed in various tissues and cells such as in peripheral mononuclear cells and hormone-secreting pituitary cells. Expression in pancreatic lymph nodes of patients with type 1 diabetes is 20 times higher than in healthy controls. Highly expressed in fetal and adult brain.

It is found in the nucleus. The protein localises to the cytoplasm. Its subcellular location is the secreted. In terms of biological role, transcription factor that binds to sequence with multiple copies of 5'-TTC[CG]G-3' present in its own promoter and that of the HNRPA2B1 gene. Down-regulates transcription of these genes. Binds to the retinoic acid response element (RARE) 5'-AGGGTTCACCGAAAGTTCA-3'. Activates the proenkephalin gene independently of promoter binding, probably through protein-protein interaction. When secreted, behaves as an inhibitor of cell proliferation, by arresting cells in the G0 or G1 phase. Required for neural tube closure and skeletal patterning. Regulates epithelial cell proliferation and side-branching in the mammary gland. Controls the expression of peripheral tissue antigens in pancreatic lymph nodes. Isoform 1 displays greater transcriptional activity than isoform 4. Isoform 4 may inhibit transcriptional activity of isoform 1 by interacting with isoform 1 and retaining it in the cytoplasm. Transcriptional activator of EIF4G3. This Homo sapiens (Human) protein is Deformed epidermal autoregulatory factor 1 homolog (DEAF1).